The primary structure comprises 29 residues: Mycofactocin precursor peptide (29 aa).

The protein belongs to the mycofactocin precursor peptide family. The post-translational modifications that lead to mycofactocin involve oxidative decarboxylation of the C-terminal tyrosine residue catalyzed by MftC, introduction of a tyramine-valine cross-link, removal of the modified C-terminal dipeptide by MftE. The released dipeptide then undergoes oxidative deamination by MftD, glycosylation by MftF and methylation by an unknown enzyme.

In terms of biological role, precursor peptide that leads to mycofactocin (MFT) after extensive post-translational modifications by enzymes encoded by adjacent genes. Mycofactocin acts as a redox cofactor of nicotinamide-dependent oxidoreductases encoded in the same locus. This Mycobacterium tuberculosis (strain ATCC 25618 / H37Rv) protein is Mycofactocin precursor peptide.